A 138-amino-acid polypeptide reads, in one-letter code: Large ribosomal subunit protein uL16 (138 aa).

Residues 1–19 are compositionally biased toward basic residues; that stretch reads MLIPKRVKYRRQHRPHRSG. The segment at 1 to 24 is disordered; the sequence is MLIPKRVKYRRQHRPHRSGVSKGG.

It belongs to the universal ribosomal protein uL16 family. Part of the 50S ribosomal subunit.

Functionally, binds 23S rRNA and is also seen to make contacts with the A and possibly P site tRNAs. This Corynebacterium jeikeium (strain K411) protein is Large ribosomal subunit protein uL16.